A 200-amino-acid chain; its full sequence is Outer-membrane lipoprotein LolB (200 aa).

The first 18 residues, 1–18, serve as a signal peptide directing secretion; the sequence is MRRGRLLIAGLAALVLSA. Residue Cys19 is the site of N-palmitoyl cysteine attachment. Cys19 carries the S-diacylglycerol cysteine lipid modification.

It belongs to the LolB family. As to quaternary structure, monomer.

The protein localises to the cell outer membrane. Functionally, plays a critical role in the incorporation of lipoproteins in the outer membrane after they are released by the LolA protein. This is Outer-membrane lipoprotein LolB from Alkalilimnicola ehrlichii (strain ATCC BAA-1101 / DSM 17681 / MLHE-1).